We begin with the raw amino-acid sequence, 474 residues long: tRNA-2-methylthio-N(6)-dimethylallyladenosine synthase (474 aa).

The 118-residue stretch at 3 to 120 folds into the MTTase N-terminal domain; the sequence is KKLHIKTWGC…LPEMINHVNG (118 aa). Residues C12, C49, C83, C157, C161, and C164 each coordinate [4Fe-4S] cluster. The Radical SAM core domain occupies 143 to 375; it reads RAEGPTAFVS…QERITQQAMQ (233 aa). Residues 378–441 enclose the TRAM domain; the sequence is RRMKGKVQRI…PNSLRGVLLR (64 aa).

Belongs to the methylthiotransferase family. MiaB subfamily. Monomer. It depends on [4Fe-4S] cluster as a cofactor.

The protein resides in the cytoplasm. It catalyses the reaction N(6)-dimethylallyladenosine(37) in tRNA + (sulfur carrier)-SH + AH2 + 2 S-adenosyl-L-methionine = 2-methylsulfanyl-N(6)-dimethylallyladenosine(37) in tRNA + (sulfur carrier)-H + 5'-deoxyadenosine + L-methionine + A + S-adenosyl-L-homocysteine + 2 H(+). Its function is as follows. Catalyzes the methylthiolation of N6-(dimethylallyl)adenosine (i(6)A), leading to the formation of 2-methylthio-N6-(dimethylallyl)adenosine (ms(2)i(6)A) at position 37 in tRNAs that read codons beginning with uridine. In Sodalis glossinidius (strain morsitans), this protein is tRNA-2-methylthio-N(6)-dimethylallyladenosine synthase.